A 233-amino-acid polypeptide reads, in one-letter code: Small ribosomal subunit protein uS2c (233 aa).

The protein belongs to the universal ribosomal protein uS2 family.

It localises to the plastid. The protein localises to the chloroplast. This Galdieria sulphuraria (Red alga) protein is Small ribosomal subunit protein uS2c (rps2).